The sequence spans 987 residues: SNF2 domain-containing protein ENL1 (987 aa).

Disordered stretches follow at residues 1-172 (MASP…AYGG) and 224-245 (FGDYDDEDDIDQDAENGKENHA). 2 stretches are compositionally biased toward pro residues: residues 18-27 (TPPAPTPLAA) and 51-71 (NPNPNPNPNPKPPPPPPPQEP). Residues 99 to 110 (DSIRDILDDLTT) are compositionally biased toward basic and acidic residues. Over residues 141–156 (PSQSQLNDGTKPSSSF) the composition is skewed to polar residues. The span at 226–237 (DYDDEDDIDQDA) shows a compositional bias: acidic residues. Residues 292 to 466 (WVLHCRGTGG…WALFYFCCPE (175 aa)) enclose the Helicase ATP-binding domain. 305–312 (DDMGLGKT) provides a ligand contact to ATP. Residues 417–420 (DEGH) carry the DEAH box motif. Residues 645-801 (SLLQNLVSEG…TRYFSKRDIQ (157 aa)) form the Helicase C-terminal domain.

The protein belongs to the SNF2/RAD54 helicase family. Expressed in ovaries, roots, shoots and leaves.

Its subcellular location is the cytoplasm. It is found in the chromosome. In terms of biological role, DNA helicase that acts as an essential component of the spindle assembly checkpoint. Plays an indispensable role in the development of seed endosperm. Is required to secure sister chromosome separation during endosperm syncytial mitosis, which involves extremely rapid free nuclear cycles. The chain is SNF2 domain-containing protein ENL1 from Oryza sativa subsp. japonica (Rice).